A 172-amino-acid chain; its full sequence is Myosin regulatory light chain RLC-A (172 aa).

Basic residues predominate over residues 1-16; the sequence is MSSKRAKTKTTKKRPQ. The tract at residues 1–20 is disordered; sequence MSSKRAKTKTTKKRPQRATS. Thr-19 is modified (phosphothreonine; by MLCK). Residue Ser-20 is modified to Phosphoserine; by MLCK. EF-hand domains are found at residues 29–64, 98–133, and 134–169; these read SQIQEFKEAFNMIDQNRDGFIDKEDLHDMLASMGKN, DPEDVIRNAFACFDEEAIGTIQEDYLRELLTTMGDR, and FTDEEVDELYREAPIDKKGNFNYIEFTRILKHGAKD. Positions 42, 44, 46, and 53 each coordinate Ca(2+).

In terms of assembly, myosin is a hexamer of 2 heavy chains and 4 light chains. Post-translationally, phosphorylation increases the actin-activated myosin ATPase activity and thereby regulates the contractile activity.

Functionally, myosin regulatory subunit that plays an important role in regulation of both smooth muscle and nonmuscle cell contractile activity via its phosphorylation. Implicated in cytokinesis, receptor capping, and cell locomotion. In Rattus norvegicus (Rat), this protein is Myosin regulatory light chain RLC-A (Rlc-a).